Here is a 527-residue protein sequence, read N- to C-terminus: Neutrophil cytosol factor 2 (527 aa).

3 TPR repeats span residues 37 to 70, 71 to 104, and 121 to 154; these read SRIC…DKHL, AVSY…LRGN, and CEVL…KSEP. Threonine 233 carries the post-translational modification Phosphothreonine. The SH3 1 domain maps to 240–299; sequence LEGEAHRVLFGFVPETPEELQVMPGNIVFVLKKGNDNWATVMFNGQKGLVPCNYLEPVEL. A disordered region spans residues 304–345; sequence QQQPQEETSLESDIPAPPSSSAPGRPQLSPGQKGKEEPKQEI. Serine 324 is modified (phosphoserine). Over residues 336-345 the composition is skewed to basic and acidic residues; sequence KGKEEPKQEI. A PB1 domain is found at 352–430; sequence SYTLKVHYKY…YCLTLWCENT (79 aa). Residue serine 400 is modified to Phosphoserine. Positions 434–457 are disordered; the sequence is QGFPDEPEESKKSDANNQTTEPEL. One can recognise an SH3 2 domain in the interval 458–517; the sequence is KEGSKVVALFSYEATQPEDLEFLEGDVILVISTVNEQWLEGECKGKVGIFPKAFVEQHPT.

The protein belongs to the NCF2/NOXA1 family. In terms of assembly, component of the phagocyte NADPH oxidase complex composed of an obligatory core heterodimer formed by the membrane proteins CYBA and CYBB and the cytosolic regulatory subunits NCF1/p47-phox, NCF2/p67-phox, NCF4/p40-phox and the small GTPase RAC1 or RAC2. Part of a cytosolic complex composed at least by NCF1, NCF2 and NCF4. Interacts with NCF4. Interacts (via the C-terminal SH3 domain) with NCF1 (via C-terminus). Interacts with SYTL1 and RAC1. May interact with NOXO1. Interacts with S100A8 and calprotectin (S100A8/9). Interacts with GBP7 (via GB1/RHD3-type G domain). Interacts with CYBB; the interaction is enhanced in the presence of GBP7.

The protein resides in the cytoplasm. In terms of biological role, subunit of the phagocyte NADPH oxidase complex that mediates the transfer of electrons from cytosolic NADPH to O2 to produce the superoxide anion (O2(-)). In the activated complex, electrons are first transferred from NADPH to flavin adenine dinucleotide (FAD) and subsequently transferred via two heme molecules to molecular oxygen, producing superoxide through an outer-sphere reaction. Activation of the NADPH oxidase complex is initiated by the assembly of cytosolic subunits of the NADPH oxidase complex with the core NADPH oxidase complex to form a complex at the plasma membrane or phagosomal membrane. This activation process is initiated by phosphorylation dependent binding of the cytosolic NCF1/p47-phox subunit to the C-terminus of CYBA/p22-phox. In Bos taurus (Bovine), this protein is Neutrophil cytosol factor 2.